The chain runs to 123 residues: MPTVNQLIAKPRKAPVKRNKVPAMEANPQKRGVCTRVYTTSPKKPNSAMRKVAKIRLANGFEVIGYIPGEGHNLQEHSVVMIRGGRVKDLPGVRYHIIRGVLDTQGVKSRKQRRSKYGAKRPK.

A 3-methylthioaspartic acid modification is found at aspartate 89.

This sequence belongs to the universal ribosomal protein uS12 family. As to quaternary structure, part of the 30S ribosomal subunit. Contacts proteins S8 and S17. May interact with IF1 in the 30S initiation complex.

Functionally, with S4 and S5 plays an important role in translational accuracy. In terms of biological role, interacts with and stabilizes bases of the 16S rRNA that are involved in tRNA selection in the A site and with the mRNA backbone. Located at the interface of the 30S and 50S subunits, it traverses the body of the 30S subunit contacting proteins on the other side and probably holding the rRNA structure together. The combined cluster of proteins S8, S12 and S17 appears to hold together the shoulder and platform of the 30S subunit. This Chelativorans sp. (strain BNC1) protein is Small ribosomal subunit protein uS12.